Here is a 347-residue protein sequence, read N- to C-terminus: S-adenosylmethionine decarboxylase proenzyme 4 (347 aa).

Residues Glu-7 and Glu-10 contribute to the active site. Glu-66 contributes to the substrate binding site. Residue Ser-67 is the Schiff-base intermediate with substrate; via pyruvic acid of the active site. Residue Ser-67 is modified to Pyruvic acid (Ser); by autocatalysis. Cys-81 (proton donor; for catalytic activity) is an active-site residue. Residues Ser-237 and His-250 each act as proton acceptor; for processing activity in the active site. A substrate-binding site is contributed by Glu-254.

Belongs to the eukaryotic AdoMetDC family. It depends on pyruvate as a cofactor. In terms of processing, is synthesized initially as an inactive proenzyme. Formation of the active enzyme involves a self-maturation process in which the active site pyruvoyl group is generated from an internal serine residue via an autocatalytic post-translational modification. Two non-identical subunits are generated from the proenzyme in this reaction, and the pyruvate is formed at the N-terminus of the alpha chain, which is derived from the carboxyl end of the proenzyme. The post-translation cleavage follows an unusual pathway, termed non-hydrolytic serinolysis, in which the side chain hydroxyl group of the serine supplies its oxygen atom to form the C-terminus of the beta chain, while the remainder of the serine residue undergoes an oxidative deamination to produce ammonia and the pyruvoyl group blocking the N-terminus of the alpha chain.

The catalysed reaction is S-adenosyl-L-methionine + H(+) = S-adenosyl 3-(methylsulfanyl)propylamine + CO2. Its pathway is amine and polyamine biosynthesis; S-adenosylmethioninamine biosynthesis; S-adenosylmethioninamine from S-adenosyl-L-methionine: step 1/1. Functionally, essential for biosynthesis of the polyamines spermidine and spermine. Essential for polyamine homeostasis, and normal plant embryogenesis, growth and development. This Arabidopsis thaliana (Mouse-ear cress) protein is S-adenosylmethionine decarboxylase proenzyme 4.